A 438-amino-acid polypeptide reads, in one-letter code: Argininosuccinate lyase (438 aa).

This sequence belongs to the lyase 1 family. Argininosuccinate lyase subfamily.

It is found in the cytoplasm. The catalysed reaction is 2-(N(omega)-L-arginino)succinate = fumarate + L-arginine. It functions in the pathway amino-acid biosynthesis; L-arginine biosynthesis; L-arginine from L-ornithine and carbamoyl phosphate: step 3/3. The chain is Argininosuccinate lyase from Clostridium tetani (strain Massachusetts / E88).